Reading from the N-terminus, the 990-residue chain is Nucleotide-binding leucine-rich repeat (NLR)-like protein (990 aa).

The purine nucleoside phosphorylase domain stretch occupies residues 22–304 (GWICAIPTEL…AVAAAYAKIL (283 aa)). The NB-ARC domain occupies 334 to 563 (REEHLRQVLT…TISNYLEVYE (230 aa)). TPR repeat units follow at residues 732–765 (RDLLHNIGEYYYRTGKYREAEEFYWRALELKKLA), 774–807 (IGSMNNLAVVYERHGEYAKAESLQRQTLELMKQV), 816–849 (LGSMNNLALVYEQQGEYAEAEKLQQQTLELRKQA), 858–891 (LMSMNNLATIYEQQGEYAKAESLQRQTLELKQQT), 900–933 (LASMNNLALVYEHQGEYAKAETLYQQTLKLRKQV), and 942–975 (LQSMNNLAIVYRLQGKYIEAEGLQQQQQSQATLD). Positions 965-990 (QQQQQSQATLDEGRLSKPARKRRKKK) are disordered. A compositionally biased stretch (basic residues) spans 981–990 (KPARKRRKKK).

It carries out the reaction ATP + H2O = D-ribose 5-triphosphate + adenine. The enzyme catalyses dATP + H2O = 2-deoxyribose 5-triphosphate + adenine. The N-terminal purine nucleoside phosphorylase (PNP) domain cleaves the N-glycosidic bond of ATP, and to a lesser extent dATP; has very weak activity on adenosine and deoxyadenosine and no activity on (d)ADP or (d)AMP. In Hyaloscypha variabilis (strain UAMH 11265 / GT02V1 / F) (Meliniomyces variabilis), this protein is Nucleotide-binding leucine-rich repeat (NLR)-like protein.